A 103-amino-acid chain; its full sequence is uncharacterized protein (103 aa).

A signal peptide spans 1-21 (MTGFKVSSFFYILALSRFFNA).

This is an uncharacterized protein from Saccharomyces cerevisiae (strain ATCC 204508 / S288c) (Baker's yeast).